Reading from the N-terminus, the 351-residue chain is Histidinol-phosphate aminotransferase 2 (351 aa).

Lys210 carries the N6-(pyridoxal phosphate)lysine modification.

It belongs to the class-II pyridoxal-phosphate-dependent aminotransferase family. Histidinol-phosphate aminotransferase subfamily. In terms of assembly, homodimer. Pyridoxal 5'-phosphate serves as cofactor.

It catalyses the reaction L-histidinol phosphate + 2-oxoglutarate = 3-(imidazol-4-yl)-2-oxopropyl phosphate + L-glutamate. Its pathway is amino-acid biosynthesis; L-histidine biosynthesis; L-histidine from 5-phospho-alpha-D-ribose 1-diphosphate: step 7/9. This is Histidinol-phosphate aminotransferase 2 (hisC2) from Rhizobium meliloti (strain 1021) (Ensifer meliloti).